Reading from the N-terminus, the 94-residue chain is Small ribosomal subunit protein bS18 (94 aa).

This sequence belongs to the bacterial ribosomal protein bS18 family. As to quaternary structure, part of the 30S ribosomal subunit. Forms a tight heterodimer with protein bS6.

In terms of biological role, binds as a heterodimer with protein bS6 to the central domain of the 16S rRNA, where it helps stabilize the platform of the 30S subunit. In Rickettsia bellii (strain OSU 85-389), this protein is Small ribosomal subunit protein bS18.